The primary structure comprises 419 residues: Transcriptional regulator Myc-A (419 aa).

Residue Thr-69 is glycosylated (O-linked (GlcNAc) threonine). A 9aaTAD motif is present at residues 87–95 (EMVSEFLGD). 2 disordered regions span residues 199-269 (QPML…PSPL) and 305-343 (NNHSINSSSSNRHVKQRKCASPRTSDSEDNDKRRTHNVL). Positions 217–245 (DSEDEEEEDEEEEEEEEEEEEEEEEEEID) are enriched in acidic residues. Basic and acidic residues predominate over residues 248 to 262 (TVEKRQKRHETDASE). Residues 305 to 315 (NNHSINSSSSN) are compositionally biased toward low complexity. The bHLH domain maps to 335–387 (DKRRTHNVLERQRRNELKLSFFALRDEIPEVANNEKAAKVVILKKATECIHSM). Residues 394-415 (LLSIKEQLRRKSEQLKHRLQQL) are leucine-zipper.

In terms of assembly, efficient DNA binding requires dimerization with another bHLH protein. Binds DNA as a heterodimer with max. As to expression, high levels are seen in the kidney, gills and uterus.

Its subcellular location is the nucleus. Transcription factor that binds DNA in a non-specific manner, yet also specifically recognizes the core sequence 5'-CAC[GA]TG-3'. Activates the transcription of growth-related genes. This is Transcriptional regulator Myc-A (myca) from Danio rerio (Zebrafish).